Here is a 201-residue protein sequence, read N- to C-terminus: Glutathione peroxidase 1 (201 aa).

2 positions are modified to phosphoserine: S7 and S32. U47 is a catalytic residue. Position 47 (U47) is a non-standard amino acid, selenocysteine. K62, K86, and K112 each carry N6-acetyllysine; alternate. Residues K62, K86, and K112 each carry the N6-succinyllysine; alternate modification. The residue at position 119 (K119) is an N6-acetyllysine. Residue K146 is modified to N6-acetyllysine; alternate. K146 is modified (N6-succinyllysine; alternate). S195 bears the Phosphoserine mark.

This sequence belongs to the glutathione peroxidase family. In terms of assembly, homotetramer. Interacts with MIEN1. During periods of oxidative stress, Sec-47 may react with a superoxide radical, irreversibly lose hydroselenide and be converted to dehydroalanine. As to expression, expressed in liver, kidney, lung, brain and heart.

Its subcellular location is the cytoplasm. The protein localises to the mitochondrion. It carries out the reaction 2 glutathione + H2O2 = glutathione disulfide + 2 H2O. It catalyses the reaction a hydroperoxy polyunsaturated fatty acid + 2 glutathione = a hydroxy polyunsaturated fatty acid + glutathione disulfide + H2O. The catalysed reaction is tert-butyl hydroperoxide + 2 glutathione = tert-butanol + glutathione disulfide + H2O. The enzyme catalyses cumene hydroperoxide + 2 glutathione = 2-phenylpropan-2-ol + glutathione disulfide + H2O. It carries out the reaction (13S)-hydroperoxy-(9Z,11E)-octadecadienoate + 2 glutathione = (13S)-hydroxy-(9Z,11E)-octadecadienoate + glutathione disulfide + H2O. It catalyses the reaction (9S)-hydroperoxy-(10E,12Z)-octadecadienoate + 2 glutathione = (9S)-hydroxy-(10E,12Z)-octadecadienoate + glutathione disulfide + H2O. The catalysed reaction is (5S)-hydroperoxy-(6E,8Z,11Z,14Z)-eicosatetraenoate + 2 glutathione = (5S)-hydroxy-(6E,8Z,11Z,14Z)-eicosatetraenoate + glutathione disulfide + H2O. The enzyme catalyses (12S)-hydroperoxy-(5Z,8Z,10E,14Z)-eicosatetraenoate + 2 glutathione = (12S)-hydroxy-(5Z,8Z,10E,14Z)-eicosatetraenoate + glutathione disulfide + H2O. It carries out the reaction (12R)-hydroperoxy-(5Z,8Z,10E,14Z)-eicosatetraenoate + 2 glutathione = (12R)-hydroxy-(5Z,8Z,10E,14Z)-eicosatetraenoate + glutathione disulfide + H2O. It catalyses the reaction (15S)-hydroperoxy-(5Z,8Z,11Z,13E)-eicosatetraenoate + 2 glutathione = (15S)-hydroxy-(5Z,8Z,11Z,13E)-eicosatetraenoate + glutathione disulfide + H2O. The catalysed reaction is (5S)-hydroperoxy-(6E,8Z,11Z,14Z,17Z)-eicosapentaenoate + 2 glutathione = (5S)-hydroxy-(6E,8Z,11Z,14Z,17Z)-eicosapentaenoate + glutathione disulfide + H2O. The enzyme catalyses (12S)-hydroperoxy-(5Z,8Z,10E,14Z,17Z)-eicosapentaenoate + 2 glutathione = (12S)-hydroxy-(5Z,8Z,10E,14Z,17Z)-eicosapentaenoate + glutathione disulfide + H2O. It carries out the reaction (15S)-hydroperoxy-(5Z,8Z,11Z,13E,17Z)-eicosapentaenoate + 2 glutathione = (15S)-hydroxy-(5Z,8Z,11Z,13E,17Z)-eicosapentaenoate + glutathione disulfide + H2O. It catalyses the reaction (15S)-hydroperoxy-(11Z,13E)-eicosadienoate + 2 glutathione = (15S)-hydroxy-(11Z,13E)-eicosadienoate + glutathione disulfide + H2O. The catalysed reaction is (17S)-hydroperoxy-(4Z,7Z,10Z,13Z,15E,19Z)-docosahexaenoate + 2 glutathione = (17S)-hydroxy-(4Z,7Z,10Z,13Z,15E,19Z)-docosahexaenoate + glutathione disulfide + H2O. Its function is as follows. Catalyzes the reduction of hydroperoxides in a glutathione-dependent manner thus regulating cellular redox homeostasis. Can reduce small soluble hydroperoxides such as H2O2, cumene hydroperoxide and tert-butyl hydroperoxide, as well as several fatty acid-derived hydroperoxides. In platelets catalyzes the reduction of 12-hydroperoxyeicosatetraenoic acid, the primary product of the arachidonate 12-lipoxygenase pathway. The protein is Glutathione peroxidase 1 of Mus musculus (Mouse).